The chain runs to 790 residues: Histone-lysine N-methyltransferase, H3 lysine-9 specific SUVH6 (790 aa).

A disordered region spans residues 251-271; sequence QLRILGVGTSSGSSSGDSSRN. Residues 256-268 are compositionally biased toward low complexity; that stretch reads GVGTSSGSSSGDS. The YDG domain occupies 330 to 482; the sequence is GEVPGVEVGD…MNVFKFQLRR (153 aa). The 63-residue stretch at 551 to 613 folds into the Pre-SET domain; it reads KSCCCTTRCT…SCYLRVTQHG (63 aa). Zn(2+)-binding residues include C553, C554, C555, C559, C567, C569, C595, C599, C601, and C605. The region spanning 616-760 is the SET domain; sequence LPLEIFKTKS…PLQELCYDYN (145 aa). S-adenosyl-L-methionine-binding positions include 626–628, D662, Y664, R714, and 717–718; these read RGW and NH. The Zn(2+) site is built by C720, C778, C780, and C785. Residues 774 to 790 form the Post-SET domain; the sequence is KQKPCFCGAAVCRRRLY.

This sequence belongs to the class V-like SAM-binding methyltransferase superfamily. Histone-lysine methyltransferase family. Suvar3-9 subfamily.

It localises to the nucleus. The protein localises to the chromosome. It is found in the centromere. It carries out the reaction N(6)-methyl-L-lysyl(9)-[histone H3] + S-adenosyl-L-methionine = N(6),N(6)-dimethyl-L-lysyl(9)-[histone H3] + S-adenosyl-L-homocysteine + H(+). The enzyme catalyses L-lysyl(9)-[histone H3] + S-adenosyl-L-methionine = N(6)-methyl-L-lysyl(9)-[histone H3] + S-adenosyl-L-homocysteine + H(+). Its function is as follows. Histone methyltransferase. Methylates 'Lys-9' of histone H3. H3 'Lys-9' methylation represents a specific tag for epigenetic transcriptional repression. Seems to act preferentially on dsMRNA. This chain is Histone-lysine N-methyltransferase, H3 lysine-9 specific SUVH6 (SUVH6), found in Arabidopsis thaliana (Mouse-ear cress).